We begin with the raw amino-acid sequence, 272 residues long: 3-methyl-2-oxobutanoate hydroxymethyltransferase (272 aa).

Positions 50 and 89 each coordinate Mg(2+). Residues 50–51, D89, and K119 contribute to the 3-methyl-2-oxobutanoate site; that span reads DS. Residue E121 participates in Mg(2+) binding. The active-site Proton acceptor is E188.

The protein belongs to the PanB family. In terms of assembly, homodecamer; pentamer of dimers. Mg(2+) serves as cofactor.

It is found in the cytoplasm. It carries out the reaction 3-methyl-2-oxobutanoate + (6R)-5,10-methylene-5,6,7,8-tetrahydrofolate + H2O = 2-dehydropantoate + (6S)-5,6,7,8-tetrahydrofolate. It participates in cofactor biosynthesis; (R)-pantothenate biosynthesis; (R)-pantoate from 3-methyl-2-oxobutanoate: step 1/2. Catalyzes the reversible reaction in which hydroxymethyl group from 5,10-methylenetetrahydrofolate is transferred onto alpha-ketoisovalerate to form ketopantoate. The protein is 3-methyl-2-oxobutanoate hydroxymethyltransferase of Methylobacterium radiotolerans (strain ATCC 27329 / DSM 1819 / JCM 2831 / NBRC 15690 / NCIMB 10815 / 0-1).